The sequence spans 275 residues: NH(3)-dependent NAD(+) synthetase (275 aa).

ATP is bound at residue 46–53; it reads GISGGQDS. A Mg(2+)-binding site is contributed by D52. R140 contacts deamido-NAD(+). Residue T160 participates in ATP binding. A Mg(2+)-binding site is contributed by E165. Deamido-NAD(+) contacts are provided by K173 and D180. 2 residues coordinate ATP: K189 and T211. 260 to 261 provides a ligand contact to deamido-NAD(+); that stretch reads HK.

The protein belongs to the NAD synthetase family. As to quaternary structure, homodimer.

The enzyme catalyses deamido-NAD(+) + NH4(+) + ATP = AMP + diphosphate + NAD(+) + H(+). It participates in cofactor biosynthesis; NAD(+) biosynthesis; NAD(+) from deamido-NAD(+) (ammonia route): step 1/1. Catalyzes the ATP-dependent amidation of deamido-NAD to form NAD. Uses ammonia as a nitrogen source. The chain is NH(3)-dependent NAD(+) synthetase from Escherichia coli (strain K12 / MC4100 / BW2952).